A 911-amino-acid chain; its full sequence is Probable 2-oxoadipate dehydrogenase complex component E1 homolog (911 aa).

It belongs to the alpha-ketoglutarate dehydrogenase family. Thiamine diphosphate is required as a cofactor.

The protein localises to the mitochondrion. The enzyme catalyses N(6)-[(R)-lipoyl]-L-lysyl-[protein] + 2-oxoadipate + H(+) = N(6)-[(R)-S(8)-glutaryldihydrolipoyl]-L-lysyl-[protein] + CO2. 2-oxoadipate dehydrogenase (E1a) component of the 2-oxoadipate dehydrogenase complex (OADHC). Participates in the first step, rate limiting for the overall conversion of 2-oxoadipate (alpha-ketoadipate) to glutaryl-CoA and CO(2) catalyzed by the whole OADHC. Catalyzes the irreversible decarboxylation of 2-oxoadipate via the thiamine diphosphate (ThDP) cofactor and subsequent transfer of the decarboxylated acyl intermediate on an oxidized dihydrolipoyl group that is covalently amidated to the E2 enzyme (dihydrolipoyllysine-residue succinyltransferase or DLST). In Caenorhabditis elegans, this protein is Probable 2-oxoadipate dehydrogenase complex component E1 homolog.